The chain runs to 153 residues: Lysine-acyltransferase RtxC (153 aa).

His32 is a catalytic residue.

It belongs to the RTX toxin acyltransferase family.

The protein localises to the cytoplasm. The catalysed reaction is a fatty acyl-[ACP] + L-lysyl-[protein] = N(6)-(fatty acyl)-L-lysyl-[protein] + holo-[ACP] + H(+). In terms of biological role, catalyzes fatty acylation of the protoxin (RtxA) at internal lysine residues, thereby converting it to the active toxin. In Vibrio cholerae serotype O1 (strain ATCC 39315 / El Tor Inaba N16961), this protein is Lysine-acyltransferase RtxC (rtxC).